We begin with the raw amino-acid sequence, 258 residues long: Large ribosomal subunit protein uL5c (258 aa).

A chloroplast-targeting transit peptide spans 1 to 38 (MASTSLLQSTSSSFAGVRFHCRTSAAPRVGLSSFTVKA).

As to quaternary structure, component of the chloroplast large ribosomal subunit (LSU). Mature 70S chloroplast ribosomes of higher plants consist of a small (30S) and a large (50S) subunit. The 30S small subunit contains 1 molecule of ribosomal RNA (16S rRNA) and 24 different proteins. The 50S large subunit contains 3 rRNA molecules (23S, 5S and 4.5S rRNA) and 33 different proteins.

It localises to the plastid. The protein resides in the chloroplast. Functionally, component of the chloroplast ribosome (chloro-ribosome), a dedicated translation machinery responsible for the synthesis of chloroplast genome-encoded proteins, including proteins of the transcription and translation machinery and components of the photosynthetic apparatus. The protein is Large ribosomal subunit protein uL5c (RPL5) of Spinacia oleracea (Spinach).